Reading from the N-terminus, the 103-residue chain is Secreted Ly-6/uPAR-related protein 1 (103 aa).

The signal sequence occupies residues 1-22 (MASRWAVQLLLVAAWSMGCGEA). The region spanning 24 to 73 (KCYTCKEPMTSASCRTITRCKPEDTACMTTLVTVEAEYPFNQSPVVTRSC) is the UPAR/Ly6 domain. Disulfide bonds link Cys-25-Cys-50, Cys-28-Cys-37, Cys-43-Cys-73, Cys-77-Cys-93, and Cys-94-Cys-99.

Homodimer. Interacts with PLAU. Interacts with CHRNA7. As to expression, granulocytes. Expressed in skin. Predominantly expressed in the granular layer of skin, notably the acrosyringium. Identified in several biological fluids such as sweat, saliva, tears, plasma and urine.

The protein resides in the secreted. In terms of biological role, has an antitumor activity. Was found to be a marker of late differentiation of the skin. Implicated in maintaining the physiological and structural integrity of the keratinocyte layers of the skin. In vitro down-regulates keratinocyte proliferation; the function may involve the proposed role as modulator of nicotinic acetylcholine receptors (nAChRs) activity. In vitro inhibits alpha-7-dependent nAChR currents in an allosteric manner. In T cells may be involved in regulation of intracellular Ca(2+) signaling. Seems to have an immunomodulatory function in the cornea. The function may implicate a possible role as a scavenger receptor for PLAU thereby blocking PLAU-dependent functions of PLAUR such as in cell migration and proliferation. The chain is Secreted Ly-6/uPAR-related protein 1 (SLURP1) from Homo sapiens (Human).